The chain runs to 150 residues: UPF0756 membrane protein PC1_1142 (150 aa).

The next 4 helical transmembrane spans lie at 1 to 21, 51 to 71, 82 to 102, and 127 to 147; these read MAYLDPTLLILLVLAGLGIIS, YGLSIGIVILTIGVMAPIASG, FLHWKSLLAILIGVAVSWLGG, and ALFRGVPVGPLIAAGLLSLLI.

Belongs to the UPF0756 family.

It is found in the cell membrane. The chain is UPF0756 membrane protein PC1_1142 from Pectobacterium carotovorum subsp. carotovorum (strain PC1).